Consider the following 320-residue polypeptide: MTLFKRQWFVLVSAVSAALSVVLFPLEVFSASPNSVGGGVQQMNILQAIVLGFVQGMTEFLPISSTAHLKVVPVALGWGDPGVAFTAIIQLGSIAAVLWYFWGDLTRIIKGATRAIALKDYADYDLRLSLGIILGTIPIVFFGLLIKKLIPDFDSSPIRSLGAIAVASIVMSLLLGVGEKLGKRERDFEHLTMQDGLLMGLAQALALIPGVSRSGSTLTSGLFMGLQRETAARFSFLLGIPAITLAGLVELKDVFAEGIADGAALPLIVGVISAAIFSYMAIAGLLSFLKTQSTWVFIWYRLVFGIAILGAISAGILQNS.

Helical transmembrane passes span 9–29 (FVLV…LEVF), 82–102 (GVAF…WYFW), 130–150 (LGII…KKLI), 161–181 (LGAI…GEKL), 191–211 (LTMQ…IPGV), 236–256 (FLLG…DVFA), 265–285 (LPLI…IAGL), and 296–316 (VFIW…SAGI).

Belongs to the UppP family.

The protein localises to the cell inner membrane. It carries out the reaction di-trans,octa-cis-undecaprenyl diphosphate + H2O = di-trans,octa-cis-undecaprenyl phosphate + phosphate + H(+). Catalyzes the dephosphorylation of undecaprenyl diphosphate (UPP). Confers resistance to bacitracin. This Trichormus variabilis (strain ATCC 29413 / PCC 7937) (Anabaena variabilis) protein is Undecaprenyl-diphosphatase.